The following is a 994-amino-acid chain: Probable beta-galactosidase C (994 aa).

The first 19 residues, 1–19 (MKLQSILSCWAILVAQIWA), serve as a signal peptide directing secretion. Tyr78 contributes to the substrate binding site. N-linked (GlcNAc...) asparagine glycosylation occurs at Asn88. Substrate is bound by residues Asn123, Ala124, Glu125, and Asn183. The active-site Proton donor is the Glu184. Tyr247 contributes to the substrate binding site. The cysteines at positions 253 and 301 are disulfide-linked. Residue Asn272 is glycosylated (N-linked (GlcNAc...) asparagine). Residue Glu283 is the Nucleophile of the active site. Tyr350 serves as a coordination point for substrate. Asn388, Asn407, Asn433, Asn500, Asn514, Asn521, Asn584, Asn600, Asn674, Asn712, Asn717, Asn757, Asn861, and Asn969 each carry an N-linked (GlcNAc...) asparagine glycan.

It belongs to the glycosyl hydrolase 35 family.

The protein resides in the secreted. The enzyme catalyses Hydrolysis of terminal non-reducing beta-D-galactose residues in beta-D-galactosides.. Its function is as follows. Cleaves beta-linked terminal galactosyl residues from gangliosides, glycoproteins, and glycosaminoglycans. The protein is Probable beta-galactosidase C (lacC) of Aspergillus niger (strain ATCC MYA-4892 / CBS 513.88 / FGSC A1513).